A 504-amino-acid polypeptide reads, in one-letter code: Beta-xylosidase (504 aa).

The active-site Proton donor is the E160. The Nucleophile role is filled by E280.

It belongs to the glycosyl hydrolase 39 family.

It carries out the reaction Hydrolysis of (1-&gt;4)-beta-D-xylans, to remove successive D-xylose residues from the non-reducing termini.. The sequence is that of Beta-xylosidase (xynB) from Geobacillus stearothermophilus (Bacillus stearothermophilus).